The following is an 880-amino-acid chain: Valine--tRNA ligase (880 aa).

Positions 49 to 59 (PNVTGKLHLGH) match the 'HIGH' region motif. Positions 525-529 (KMSKS) match the 'KMSKS' region motif. Residue Lys528 participates in ATP binding. Residues 809-880 (LEGLINIDEE…VEKRIAELKN (72 aa)) are a coiled coil.

Belongs to the class-I aminoacyl-tRNA synthetase family. ValS type 1 subfamily. In terms of assembly, monomer.

The protein resides in the cytoplasm. It carries out the reaction tRNA(Val) + L-valine + ATP = L-valyl-tRNA(Val) + AMP + diphosphate. Functionally, catalyzes the attachment of valine to tRNA(Val). As ValRS can inadvertently accommodate and process structurally similar amino acids such as threonine, to avoid such errors, it has a 'posttransfer' editing activity that hydrolyzes mischarged Thr-tRNA(Val) in a tRNA-dependent manner. This is Valine--tRNA ligase from Bacillus licheniformis (strain ATCC 14580 / DSM 13 / JCM 2505 / CCUG 7422 / NBRC 12200 / NCIMB 9375 / NCTC 10341 / NRRL NRS-1264 / Gibson 46).